Consider the following 372-residue polypeptide: Alanine dehydrogenase (372 aa).

Residues arginine 15 and lysine 75 each coordinate substrate. Histidine 96 functions as the Proton donor/acceptor in the catalytic mechanism. Residues serine 134, 178–179 (TA), aspartate 198, serine 220, 239–240 (VL), 266–269 (IAID), arginine 279, and 298–301 (VANM) contribute to the NAD(+) site. The Proton donor/acceptor role is filled by aspartate 269.

The protein belongs to the AlaDH/PNT family. In terms of assembly, homohexamer.

It localises to the cytoplasm. It carries out the reaction L-alanine + NAD(+) + H2O = pyruvate + NH4(+) + NADH + H(+). It functions in the pathway amino-acid degradation; L-alanine degradation via dehydrogenase pathway; NH(3) and pyruvate from L-alanine: step 1/1. Functionally, catalyzes the reversible reductive amination of pyruvate to L-alanine. A key factor in the assimilation of L-alanine as an energy source via the tricarboxylic acid cycle during sporulation. The polypeptide is Alanine dehydrogenase (ald) (Geobacillus stearothermophilus (Bacillus stearothermophilus)).